Consider the following 577-residue polypeptide: 2-succinyl-5-enolpyruvyl-6-hydroxy-3-cyclohexene-1-carboxylate synthase (577 aa).

Belongs to the TPP enzyme family. MenD subfamily. As to quaternary structure, homodimer. Mg(2+) is required as a cofactor. The cofactor is Mn(2+). Thiamine diphosphate serves as cofactor.

It carries out the reaction isochorismate + 2-oxoglutarate + H(+) = 5-enolpyruvoyl-6-hydroxy-2-succinyl-cyclohex-3-ene-1-carboxylate + CO2. The protein operates within quinol/quinone metabolism; 1,4-dihydroxy-2-naphthoate biosynthesis; 1,4-dihydroxy-2-naphthoate from chorismate: step 2/7. It functions in the pathway quinol/quinone metabolism; menaquinone biosynthesis. Functionally, catalyzes the thiamine diphosphate-dependent decarboxylation of 2-oxoglutarate and the subsequent addition of the resulting succinic semialdehyde-thiamine pyrophosphate anion to isochorismate to yield 2-succinyl-5-enolpyruvyl-6-hydroxy-3-cyclohexene-1-carboxylate (SEPHCHC). The polypeptide is 2-succinyl-5-enolpyruvyl-6-hydroxy-3-cyclohexene-1-carboxylate synthase (Christiangramia forsetii (strain DSM 17595 / CGMCC 1.15422 / KT0803) (Gramella forsetii)).